The primary structure comprises 69 residues: NADH dehydrogenase [ubiquinone] 1 beta subcomplex subunit 2 (69 aa).

It belongs to the complex I NDUFB2 subunit family. Complex I is composed of at least 49 different subunits.

The protein resides in the mitochondrion inner membrane. Its function is as follows. Accessory subunit of the mitochondrial membrane respiratory chain NADH dehydrogenase (Complex I), that is believed not to be involved in catalysis. Complex I functions in the transfer of electrons from NADH to the respiratory chain. The immediate electron acceptor for the enzyme is believed to be ubiquinone. The chain is NADH dehydrogenase [ubiquinone] 1 beta subcomplex subunit 2 from Arabidopsis thaliana (Mouse-ear cress).